Here is a 456-residue protein sequence, read N- to C-terminus: UDP-N-acetylmuramate--L-alanine ligase (456 aa).

Glycine 114–threonine 120 provides a ligand contact to ATP.

The protein belongs to the MurCDEF family.

The protein resides in the cytoplasm. It carries out the reaction UDP-N-acetyl-alpha-D-muramate + L-alanine + ATP = UDP-N-acetyl-alpha-D-muramoyl-L-alanine + ADP + phosphate + H(+). Its pathway is cell wall biogenesis; peptidoglycan biosynthesis. Cell wall formation. The polypeptide is UDP-N-acetylmuramate--L-alanine ligase (murC) (Porphyromonas gingivalis (strain ATCC BAA-308 / W83)).